A 92-amino-acid polypeptide reads, in one-letter code: Small ribosomal subunit protein bS20 (92 aa).

A disordered region spans residues 1–23 (MANTTSAKKATRKIARRTDVNKA).

Belongs to the bacterial ribosomal protein bS20 family.

Binds directly to 16S ribosomal RNA. This chain is Small ribosomal subunit protein bS20, found in Rhizobium leguminosarum bv. trifolii (strain WSM2304).